The following is a 338-amino-acid chain: MKRMIALDGAQGEGGGQILRSALSLSMITGLPFTITGIRAGRAKPGLLRQHLTAVKAAAEICRATVEGAELGSQRLLFRPGTVRGGDYRFAIGSAGSCTLVLQTVLPALWFADGPSRVEVSGGTDNPSAPPADFIRRVLEPLLAKIGIHQQTTLLRHGFYPAGGGVVATEVSPVTSFNTLQLGERGNIVRLRGEVLLAGVPRHVAEREIATLAASFSLHEQNIHNLPRDQGPGNTVSLEVESENITERFFVVGEKRVSAEVVAAQLVKEVKRYLASPAAVGEYLADQLVLPMALAGAGEFTVAHPSCHLLTNIAVVERFLPVRFGLVEADGVTRVSIE.

Residues Gln-103 and Tyr-283 to Gln-287 contribute to the ATP site. Catalysis depends on His-308, which acts as the Tele-AMP-histidine intermediate.

It belongs to the RNA 3'-terminal cyclase family. Type 1 subfamily.

The protein resides in the cytoplasm. The enzyme catalyses a 3'-end 3'-phospho-ribonucleotide-RNA + ATP = a 3'-end 2',3'-cyclophospho-ribonucleotide-RNA + AMP + diphosphate. Its function is as follows. Catalyzes the conversion of 3'-phosphate to a 2',3'-cyclic phosphodiester at the end of RNA. The mechanism of action of the enzyme occurs in 3 steps: (A) adenylation of the enzyme by ATP; (B) transfer of adenylate to an RNA-N3'P to produce RNA-N3'PP5'A; (C) and attack of the adjacent 2'-hydroxyl on the 3'-phosphorus in the diester linkage to produce the cyclic end product. The biological role of this enzyme is unknown but it is likely to function in some aspects of cellular RNA processing. This is RNA 3'-terminal phosphate cyclase from Escherichia coli O7:K1 (strain IAI39 / ExPEC).